A 256-amino-acid chain; its full sequence is DNA repair protein RecO (256 aa).

This sequence belongs to the RecO family.

Involved in DNA repair and RecF pathway recombination. The protein is DNA repair protein RecO of Streptococcus pneumoniae serotype 2 (strain D39 / NCTC 7466).